Here is a 261-residue protein sequence, read N- to C-terminus: Membrane protein insertase MisCA (261 aa).

Positions 1–22 (MLLKRRIGLLLSMVGVFMLLAG) are cleaved as a signal peptide. Residue Cys23 is the site of N-palmitoyl cysteine attachment. Residue Cys23 is the site of S-diacylglycerol cysteine attachment. 5 helical membrane passes run 61–81 (YGLS…PLMI), 131–151 (LAGC…YHAI), 174–194 (YILP…MMAG), 204–224 (MMLW…PAAL), and 225–245 (SLYW…IKGP).

It belongs to the OXA1/ALB3/YidC family. Type 2 subfamily. As to quaternary structure, mostly monomeric, it may also form dimers. Interacts with SpoIIIAE. Forms a complex with the F(1)F(0) ATP synthase in which can be found the alpha, beta, gamma, delta and epsilon subunits of F(1) and a, b and subunits of F(0). YqgA is found in the same complex.

The protein resides in the cell membrane. Its function is as follows. Required for the insertion and/or proper folding and/or complex formation of integral membrane proteins into the membrane. Involved in integration of membrane proteins that insert both dependently and independently of the Sec translocase complex, as well as at least some lipoproteins. Also involved in protein secretion processes. Essential for sporulation by activating sigma factor SpoIIIG/SigG after engulfment is completed in the prespore, maybe by acting on SpoIIIAE. It has an overlapping, although partly distinct, function compared to YqjG(MisCB). This chain is Membrane protein insertase MisCA (misCA), found in Bacillus subtilis (strain 168).